We begin with the raw amino-acid sequence, 541 residues long: Sialate O-acetylesterase (541 aa).

The first 23 residues, 1 to 23 (MVSPGPVFGIVLLIIARVSRSAG), serve as a signal peptide directing secretion. N-linked (GlcNAc...) asparagine glycosylation is found at Asn107, Asn138, Asn188, Asn293, Asn356, Asn427, Asn448, and Asn462.

Disulfide-linked heterodimer of a small subunit and a large subunit. Post-translationally, the two subunits are derived from a single precursor by proteolytic cleavage. The lysosomal isoform is glycosylated. As to expression, highly expressed in liver, testis, and kidney, whereas skeletal muscle, adipose tissue, and heart have lower levels. Highest expression in brain and ovary and lower levels in liver and thymus.

The protein resides in the lysosome. The protein localises to the cytoplasm. It carries out the reaction N-acetyl-9-O-acetylneuraminate + H2O = N-acetylneuraminate + acetate + H(+). The enzyme catalyses an Ac-O-9-sialoglycoconjugate + H2O = a sialoglycoconjugate + acetate + H(+). Inhibited by diisopropyl fluorophosphate and diethyl-P-nitrophenyl phosphate. Catalyzes the removal of O-acetyl ester groups from position 9 of the free diacetylated sialate N-acetyl-9-O-acetylneuraminate (Neu5,9Ac2) in the cytosol and of the diacetylated sialate residues of sialylglycoconjugates in the lysosomes. Together with the sialate-O-acetyltransferase they regulate the balance of acetylated sialoglycoconjugates, key players in various processes such as cell-cell interactions, host-pathogen recognition, and tumor antigenicity. The chain is Sialate O-acetylesterase (Siae) from Mus musculus (Mouse).